The following is an 840-amino-acid chain: Mechanosensitive ion channel protein Msy2 (840 aa).

The Cytoplasmic segment spans residues 1-68 (MNEHRREPHR…WFNNLSFITR (68 aa)). The helical transmembrane segment at 69-89 (WITIWFPLAGALVIPLAVGVS) threads the bilayer. At 90 to 100 (PYPNAKLGGVR) the chain is on the lumenal side. A helical transmembrane segment spans residues 101–121 (IFWIFVWLEVAWGGFWVSRVI). At 122 to 126 (ARLLP) the chain is on the cytoplasmic side. A helical membrane pass occupies residues 127–147 (YILYPLMGILPFTMYKYTVIL). Over 148 to 151 (TALE) the chain is Lumenal. Residues 152 to 172 (MPLAIFFCSIVCVCTFSPIMI) form a helical membrane-spanning segment. Residues 173–225 (GKGNFTSTTVTTTTSATATPTASASSNAVESVFVTKTAASVPSWIKVITKILG) are Cytoplasmic-facing. The helical transmembrane segment at 226-246 (AAVVTSIVLLLEKIFLHFIGF) threads the bilayer. At 247-449 (HYHEVQYQYR…LALGKLDRVG (203 aa)) the chain is on the lumenal side. Positions 392 to 427 (IPDDEINDIFHILDNDYSRTVTLDEMEQFTREISIE) constitute an EF-hand domain. A helical membrane pass occupies residues 450-491 (LGVVGIIAVLTFISFLDTSFATILAAFGTTLLSLSFVFSTSA). Topologically, residues 492 to 840 (QELMSSIIFL…SQNMDGQIQY (349 aa)) are cytoplasmic. 2 disordered regions span residues 677 to 730 (EYSK…KRED) and 775 to 819 (ESNG…NTQA). The segment covering 688 to 700 (SDISSTASSNSLS) has biased composition (low complexity). The span at 708 to 730 (SESRNYHTHDEDNSSDDNHKRED) shows a compositional bias: basic and acidic residues. A compositionally biased stretch (low complexity) spans 776–819 (SNGNANGDNTATNSQGATDNGQTTTNTTQNNVDNTQATTDNTQA).

Belongs to the MscS (TC 1.A.23) family.

The protein resides in the endoplasmic reticulum membrane. Its function is as follows. Regulates intracellular calcium levels and cell volume for survival in response to hypo-osmotic shock. Involved in maintaining vacuole integrity and protecting the nuclear envelope upon hypo-osmotic shock. The sequence is that of Mechanosensitive ion channel protein Msy2 from Schizosaccharomyces pombe (strain 972 / ATCC 24843) (Fission yeast).